Consider the following 353-residue polypeptide: Nicotinate-nucleotide--dimethylbenzimidazole phosphoribosyltransferase (353 aa).

The active-site Proton acceptor is glutamate 318.

It belongs to the CobT family.

It carries out the reaction 5,6-dimethylbenzimidazole + nicotinate beta-D-ribonucleotide = alpha-ribazole 5'-phosphate + nicotinate + H(+). It participates in nucleoside biosynthesis; alpha-ribazole biosynthesis; alpha-ribazole from 5,6-dimethylbenzimidazole: step 1/2. Catalyzes the synthesis of alpha-ribazole-5'-phosphate from nicotinate mononucleotide (NAMN) and 5,6-dimethylbenzimidazole (DMB). This Chloroflexus aggregans (strain MD-66 / DSM 9485) protein is Nicotinate-nucleotide--dimethylbenzimidazole phosphoribosyltransferase.